The chain runs to 239 residues: Large ribosomal subunit protein uL3 (239 aa).

Disordered regions lie at residues 140–164 and 211–239; these read SHRS…KMPG and PLPK…QEGA. Gln-151 is modified (N5-methylglutamine).

The protein belongs to the universal ribosomal protein uL3 family. As to quaternary structure, part of the 50S ribosomal subunit. Forms a cluster with proteins L14 and L19. In terms of processing, methylated by PrmB.

One of the primary rRNA binding proteins, it binds directly near the 3'-end of the 23S rRNA, where it nucleates assembly of the 50S subunit. The chain is Large ribosomal subunit protein uL3 from Bradyrhizobium sp. (strain ORS 278).